We begin with the raw amino-acid sequence, 587 residues long: Putative gustatory receptor 59b (587 aa).

The Cytoplasmic portion of the chain corresponds to 1–4 (MPSY). A helical transmembrane segment spans residues 5–25 (MAFTPYIMFSTNYAAIAYILI). Residues 26–62 (SRCYRDSMLLDLQRITLEVNREMLRTGKKMNSLIRRM) lie on the Extracellular side of the membrane. Residues 63–83 (FFLKTFTLTYSCLSYILAVLV) form a helical membrane-spanning segment. Residues 84-97 (YQWRAQNWSNLFNG) are Cytoplasmic-facing. The helical transmembrane segment at 98-118 (LLVNISLTILVVTTFFYFVSL) threads the bilayer. Residues 119–277 (MHVARGFDFV…CGLYPVNKAK (159 aa)) are Extracellular-facing. Asn159 is a glycosylation site (N-linked (GlcNAc...) asparagine). Residues 278–298 (WLEMVASIVVHSIMLFQFHLV) traverse the membrane as a helical segment. Residues 299–309 (MRGGYTTLFSR) lie on the Cytoplasmic side of the membrane. A helical transmembrane segment spans residues 310–330 (TYALLANIITLTMLPIVMWQV). Residues 331–403 (RSVFLAKRHY…GIDGVRRSLR (73 aa)) are Extracellular-facing. Residues 404–424 (ILLFVKFFTLSWLCITDIIFL) traverse the membrane as a helical segment. Residues 425–518 (FYSSDAVIWV…IYAPQMLATR (94 aa)) lie on the Cytoplasmic side of the membrane. A helical transmembrane segment spans residues 519 to 539 (FDHFVIGVIQAYWGAVFTFDL). Residues 540–587 (STSFLWVVYGSVQYHVRSLDYYLIDYMCDVAVEYHDSARHSWSEKECY) lie on the Extracellular side of the membrane.

Belongs to the insect chemoreceptor superfamily. Gustatory receptor (GR) family. Gr22e subfamily.

It is found in the cell membrane. Probable gustatory receptor which mediates acceptance or avoidance behavior, depending on its substrates. In Drosophila erecta (Fruit fly), this protein is Putative gustatory receptor 59b.